Reading from the N-terminus, the 215-residue chain is Large ribosomal subunit protein uL3 (215 aa).

Gln-151 is modified (N5-methylglutamine).

Belongs to the universal ribosomal protein uL3 family. Part of the 50S ribosomal subunit. Forms a cluster with proteins L14 and L19. In terms of processing, methylated by PrmB.

Its function is as follows. One of the primary rRNA binding proteins, it binds directly near the 3'-end of the 23S rRNA, where it nucleates assembly of the 50S subunit. This chain is Large ribosomal subunit protein uL3, found in Rickettsia bellii (strain OSU 85-389).